The sequence spans 1208 residues: Putative protease AXL1 (1208 aa).

Zn(2+) is bound at residue His-68. The active-site Proton acceptor is the Glu-71. His-72 and Glu-156 together coordinate Zn(2+). Position 262 is a phosphoserine (Ser-262).

The protein belongs to the peptidase M16 family. Interacts with BUD5. It depends on Zn(2+) as a cofactor.

Its subcellular location is the bud neck. Probable protease. Involved in axial budding. This is Putative protease AXL1 (AXL1) from Saccharomyces cerevisiae (strain ATCC 204508 / S288c) (Baker's yeast).